The sequence spans 142 residues: RERAGCAKGWIPFDGRCYGFFPQELSWRRAEGFCQRLGARTHLASIHSEEEHQAIVSMLASSQPYSDSEEEAGEEVWIGLHRPLGRRNWEWSDGTKLDYGSWYRDVFLRRRACVALEDTTDFATWDVELCSDRKPFICEYRT.

Cystine bridges form between Cys-6–Cys-17, Cys-34–Cys-138, and Cys-113–Cys-130. Positions 13-139 constitute a C-type lectin domain; it reads FDGRCYGFFP…CSDRKPFICE (127 aa). Ser-62, Ser-66, and Ser-68 each carry phosphoserine.

Its subcellular location is the secreted. It localises to the extracellular space. The protein resides in the extracellular matrix. This is Struthiocalcin-2 from Struthio camelus (Common ostrich).